The primary structure comprises 347 residues: Phosphoribosylformylglycinamidine cyclo-ligase (347 aa).

This sequence belongs to the AIR synthase family.

The protein resides in the cytoplasm. It carries out the reaction 2-formamido-N(1)-(5-O-phospho-beta-D-ribosyl)acetamidine + ATP = 5-amino-1-(5-phospho-beta-D-ribosyl)imidazole + ADP + phosphate + H(+). It functions in the pathway purine metabolism; IMP biosynthesis via de novo pathway; 5-amino-1-(5-phospho-D-ribosyl)imidazole from N(2)-formyl-N(1)-(5-phospho-D-ribosyl)glycinamide: step 2/2. The polypeptide is Phosphoribosylformylglycinamidine cyclo-ligase (Yersinia pseudotuberculosis serotype O:1b (strain IP 31758)).